A 230-amino-acid polypeptide reads, in one-letter code: Transmembrane ascorbate ferrireductase 2 (230 aa).

2 helical membrane passes run 5 to 25 and 50 to 70; these read VLGG…IAAL and VHPV…MLAY. Positions 14–218 constitute a Cytochrome b561 domain; it reads VVRVLGFIIA…LGGFVILGVV (205 aa). Histidine 51 serves as a coordination point for heme b. 2 residues coordinate L-ascorbate: lysine 77 and lysine 81. A helical membrane pass occupies residues 82–102; sequence LVHLTLQLTAFILSLIGVWAA. A heme b-binding site is contributed by histidine 84. Phenylalanine 105, histidine 106, and tyrosine 115 together coordinate monodehydro-L-ascorbate radical. Histidine 118 contributes to the heme b binding site. The helical transmembrane segment at 120-140 threads the bilayer; sequence WLGLACLFLFAFQWAAGFVTY. L-ascorbate-binding residues include tyrosine 140, arginine 150, and alanine 151. A heme b-binding site is contributed by histidine 157. The helical transmembrane segment at 157–177 threads the bilayer; sequence HVFLGISIYALALVTATTGIL. Residues phenylalanine 182 and asparagine 186 each contribute to the monodehydro-L-ascorbate radical site. Residues 198–218 traverse the membrane as a helical segment; that stretch reads LVNTMGVLILILGGFVILGVV.

Homodimer. It depends on heme b as a cofactor. Expressed in roots, seedlings, leaves and flowers. Expressed in the L1 layer of the shoot apex, in the epidermis of leaf primordia and young leaves and in vascular bundles. In the differentiation zone of the root, detected in the pericycle and in the epidermis, but not in the cortex. Strongly expressed in the cortical region of the root tip, in the meristematic tissue and in the epidermal cell layer of lateral roots, but not in the root caps. Highly expressed in unfertilized ovules. In mature embryos, expressed in the epidermis, cotyledon tips and root tips.

It localises to the membrane. It catalyses the reaction Fe(3+)(out) + L-ascorbate(in) = monodehydro-L-ascorbate radical(in) + Fe(2+)(out) + H(+). Functionally, two-heme-containing cytochrome. Catalyzes ascorbate-dependent transmembrane ferric-chelate reduction. This chain is Transmembrane ascorbate ferrireductase 2 (CYB561B), found in Arabidopsis thaliana (Mouse-ear cress).